A 337-amino-acid polypeptide reads, in one-letter code: Ketol-acid reductoisomerase (NADP(+)) (337 aa).

The 181-residue stretch at 3–183 (VEMFYDDDAD…GGARAGVIKT (181 aa)) folds into the KARI N-terminal Rossmann domain. NADP(+) contacts are provided by residues 26 to 29 (YGSQ), Lys49, Ser52, Ser54, and 84 to 87 (DTAQ). His109 is a catalytic residue. Gly135 lines the NADP(+) pocket. A KARI C-terminal knotted domain is found at 184 to 329 (TFKEETETDL…KKLRDLMSWV (146 aa)). The Mg(2+) site is built by Asp192, Glu196, Glu228, and Glu232. Substrate is bound at residue Ser253.

The protein belongs to the ketol-acid reductoisomerase family. Mg(2+) is required as a cofactor.

It carries out the reaction (2R)-2,3-dihydroxy-3-methylbutanoate + NADP(+) = (2S)-2-acetolactate + NADPH + H(+). The catalysed reaction is (2R,3R)-2,3-dihydroxy-3-methylpentanoate + NADP(+) = (S)-2-ethyl-2-hydroxy-3-oxobutanoate + NADPH + H(+). It functions in the pathway amino-acid biosynthesis; L-isoleucine biosynthesis; L-isoleucine from 2-oxobutanoate: step 2/4. Its pathway is amino-acid biosynthesis; L-valine biosynthesis; L-valine from pyruvate: step 2/4. Involved in the biosynthesis of branched-chain amino acids (BCAA). Catalyzes an alkyl-migration followed by a ketol-acid reduction of (S)-2-acetolactate (S2AL) to yield (R)-2,3-dihydroxy-isovalerate. In the isomerase reaction, S2AL is rearranged via a Mg-dependent methyl migration to produce 3-hydroxy-3-methyl-2-ketobutyrate (HMKB). In the reductase reaction, this 2-ketoacid undergoes a metal-dependent reduction by NADPH to yield (R)-2,3-dihydroxy-isovalerate. This Mycobacterium sp. (strain JLS) protein is Ketol-acid reductoisomerase (NADP(+)).